A 548-amino-acid polypeptide reads, in one-letter code: Tyrosine-protein phosphatase non-receptor type 61F (548 aa).

The Cytoplasmic segment spans residues 1-525 (MSEQKTSGSG…KQLAAKKRRS (525 aa)). The region spanning 33–296 (FYKEICETCD…DFSYQAIIEG (264 aa)) is the Tyrosine-protein phosphatase domain. The interval 46-65 (KEKQFSTSESERHTNRGLNR) is disordered. The residue at position 83 (serine 83) is a Phosphoserine. Position 86 is a phosphotyrosine (tyrosine 86). Substrate contacts are provided by residues aspartate 203, 237–243 (CSAGIGR), and glutamine 281. Cysteine 237 functions as the Phosphocysteine intermediate in the catalytic mechanism. Short sequence motifs (PXXP motif (SH3-binding)) lie at residues 327–330 (PPLP), 339–342 (PLAP), and 394–397 (PPLP). The interval 386-517 (EVADSRPLPP…RKQRENEDKQ (132 aa)) is disordered. Residues 404–428 (SDSDEDYLLDDDDEDDTDEDEEYET) are compositionally biased toward acidic residues. 2 short sequence motifs (PXXP motif (SH3-binding)) span residues 459-462 (PAVP) and 480-483 (PASP). The span at 502 to 517 (KVNDMKRKQRENEDKQ) shows a compositional bias: basic and acidic residues. A helical transmembrane segment spans residues 526 to 545 (LLTYIAAGVVVGVICAYAYT). At 546–548 (KLG) the chain is on the extracellular side.

This sequence belongs to the protein-tyrosine phosphatase family. Non-receptor class 1 subfamily. As to quaternary structure, interacts (via C-terminus) with dock/dreadlocks; this interaction is independent of insulin stimulation and is required for dephosphorylation of the insulin-like receptor InR.

The protein resides in the cytoplasm. The protein localises to the membrane. Its subcellular location is the endomembrane system. It localises to the nucleus. The catalysed reaction is O-phospho-L-tyrosyl-[protein] + H2O = L-tyrosyl-[protein] + phosphate. In terms of biological role, non-receptor protein tyrosine phosphatase. Required for maintaining dock/dreadlocks in its non-phosphorylated state. Negative regulator of InR/insulin-like receptor signaling through dephosphorylation of tyrosines when recruited by dock/dreadlocks. This Drosophila melanogaster (Fruit fly) protein is Tyrosine-protein phosphatase non-receptor type 61F.